The following is an 874-amino-acid chain: Alanine--tRNA ligase (874 aa).

The Zn(2+) site is built by His-564, His-568, Cys-665, and His-669.

The protein belongs to the class-II aminoacyl-tRNA synthetase family. The cofactor is Zn(2+).

The protein localises to the cytoplasm. It carries out the reaction tRNA(Ala) + L-alanine + ATP = L-alanyl-tRNA(Ala) + AMP + diphosphate. In terms of biological role, catalyzes the attachment of alanine to tRNA(Ala) in a two-step reaction: alanine is first activated by ATP to form Ala-AMP and then transferred to the acceptor end of tRNA(Ala). Also edits incorrectly charged Ser-tRNA(Ala) and Gly-tRNA(Ala) via its editing domain. This is Alanine--tRNA ligase from Burkholderia vietnamiensis (strain G4 / LMG 22486) (Burkholderia cepacia (strain R1808)).